Consider the following 740-residue polypeptide: Leucine-rich repeat neuronal protein 4 (740 aa).

An N-terminal signal peptide occupies residues 1 to 18 (MRQTLPLLLLTVLRPSWA). At 19–679 (DPPQEKVPLF…PCAAFTTKPS (661 aa)) the chain is on the extracellular side. Asn42 is a glycosylation site (N-linked (GlcNAc...) asparagine). LRR repeat units follow at residues 51–74 (LPAADATALTLANRNLERLPGCLP), 75–97 (RTLRSLDASHNLLRALSTSELGH), 98–123 (LEQLQVLTLRHNRIAALRWGPGGPAG), 125–144 (HTLDLSYNQLAALPPCTGPA), 145–168 (LSSLRALALAGNPLRALQPRAFAC), 174–197 (LLNLSCTALGRGAQGGIAEAAFAG), 203–226 (LVTLEVLDLSGTFLERVESGWIRD), 228–251 (PKLTSLYLRKMPRLTTLEGDIFKM), 253–276 (PNLQQLDCQDSPALASVATHIFQD), and 277–300 (TPHLQVLLFQNCNLSSFPPWTLDS). Asn176 carries N-linked (GlcNAc...) asparagine glycosylation. Asn289, Asn379, and Asn442 each carry an N-linked (GlcNAc...) asparagine glycan. The segment at 389–517 (VAPSAAPATR…QAPNPSLSEG (129 aa)) is disordered. Composition is skewed to polar residues over residues 430-454 (APSTTNSVAGHSNSSVFPRAASTTR) and 490-514 (WDRSISSPQPGQRTHATPQAPNPSL). Positions 579-679 (IPDPPRLQGV…PCAAFTTKPS (101 aa)) constitute a Fibronectin type-III domain. Asn622 is a glycosylation site (N-linked (GlcNAc...) asparagine). A helical membrane pass occupies residues 680 to 700 (FALLLSGLCAASGLLLASTVV). Topologically, residues 701 to 740 (LSACLCRRGQTLGLQRCDTHLVAYKNPAFDDYPLGLQTVS) are cytoplasmic.

The protein resides in the membrane. Functionally, may play an important role in hippocampus-dependent long-lasting memory. This is Leucine-rich repeat neuronal protein 4 (LRRN4) from Homo sapiens (Human).